We begin with the raw amino-acid sequence, 357 residues long: Acyl-coenzyme A diphosphatase NUDT19 (357 aa).

In terms of domain architecture, Nudix hydrolase spans Ala10–Glu242. The segment at Pro72–Asp93 is disordered. Positions Pro78–Pro87 are enriched in pro residues. The Nudix box motif lies at Ala97–Gly118. Mg(2+) contacts are provided by Glu112 and Glu116. Lys300 is subject to N6-succinyllysine. Residues Ala355–Leu357 carry the Microbody targeting signal motif.

This sequence belongs to the Nudix hydrolase family. Monomer. The cofactor is Mg(2+). It depends on Mn(2+) as a cofactor. As to expression, highly expressed in the kidneys, with lower levels in skeletal muscle and brain (at protein level).

It is found in the peroxisome. It catalyses the reaction an acyl-CoA + H2O = an acyl-4'-phosphopantetheine + adenosine 3',5'-bisphosphate + 2 H(+). It carries out the reaction CoA + H2O = (R)-4'-phosphopantetheine + adenosine 3',5'-bisphosphate + 2 H(+). The enzyme catalyses hexanoyl-CoA + H2O = hexanoyl-4'-phosphopantetheine + adenosine 3',5'-bisphosphate + 2 H(+). The catalysed reaction is octanoyl-CoA + H2O = S-octanoyl-4'-phosphopantetheine + adenosine 3',5'-bisphosphate + 2 H(+). It catalyses the reaction butanoyl-CoA + H2O = S-butanoyl-4'-phosphopantetheine + adenosine 3',5'-bisphosphate + 2 H(+). It carries out the reaction propanoyl-CoA + H2O = propanoyl-4'-phosphopantetheine + adenosine 3',5'-bisphosphate + 2 H(+). The enzyme catalyses malonyl-CoA + H2O = malonyl-4'-phosphopantetheine + adenosine 3',5'-bisphosphate + 2 H(+). The catalysed reaction is succinyl-CoA + H2O = succinyl-4'-phosphopantetheine + adenosine 3',5'-bisphosphate + 2 H(+). It catalyses the reaction choloyl-CoA + H2O = S-choloyl-4'-phosphopantetheine + adenosine 3',5'-bisphosphate + 2 H(+). It carries out the reaction 4,8-dimethylnonanoyl-CoA + H2O = S-(4,8-dimethylnonanoyl)-4'-phosphopantetheine + adenosine 3',5'-bisphosphate + 2 H(+). The enzyme catalyses (9Z,12Z,15Z)-octadecatrienoyl-CoA + H2O = S-(9Z,12Z,15Z-octadecatrienoyl)-4'-phosphopantetheine + adenosine 3',5'-bisphosphate + 2 H(+). The catalysed reaction is (9Z,12Z)-octadecadienoyl-CoA + H2O = S-(9Z,12Z-octadecadienoyl)-4'-phosphopantetheine + adenosine 3',5'-bisphosphate + 2 H(+). It catalyses the reaction (9Z)-hexadecenoyl-CoA + H2O = S-(9Z-hexadecenoyl)-4'-phosphopantetheine + adenosine 3',5'-bisphosphate + 2 H(+). It carries out the reaction (9Z)-tetradecenoyl-CoA + H2O = S-(9Z-tetradecenoyl)-4'-phosphopantetheine + adenosine 3',5'-bisphosphate + 2 H(+). The enzyme catalyses (6Z)-octenoyl-CoA + H2O = S-(6Z-octenoyl)-4'-phosphopantetheine + adenosine 3',5'-bisphosphate + 2 H(+). The catalysed reaction is hexadecanoyl-CoA + H2O = S-hexadecanoyl-4'-phosphopantetheine + adenosine 3',5'-bisphosphate + 2 H(+). It catalyses the reaction tetradecanoyl-CoA + H2O = tetradecanoyl-4'-phosphopantetheine + adenosine 3',5'-bisphosphate + 2 H(+). It carries out the reaction dodecanoyl-CoA + H2O = S-dodecanoyl-4'-phosphopantetheine + adenosine 3',5'-bisphosphate + 2 H(+). The enzyme catalyses a 5'-end CoA-ribonucleoside in mRNA + H2O = a 5'-end phospho-adenosine-phospho-ribonucleoside in mRNA + (R)-4'-phosphopantetheine + 2 H(+). Inhibited by chenodeoxycholic acid (CDCA) and its conjugated derivatives, taurochenodeoxycholic acid and glycochenodeoxycholic acid. Inhibited by fluoride. In terms of biological role, fatty acyl-coenzyme A (CoA) diphosphatase that hydrolyzes fatty acyl-CoA to yield acyl-4'-phosphopantetheine and adenosine 3',5'-bisphosphate. Mediates the hydrolysis of a wide range of CoA esters, including choloyl-CoA and branched-chain fatty-acyl-CoA esters and at low substrate concentrations medium and long-chain fatty-acyl-CoA esters are the primary substrates. Highest activity seen with medium-chain acyl-CoA esters and higher rates of activity seen with the unsaturated acyl-CoA esters compared with the saturated esters. Exhibits decapping activity towards dpCoA-capped RNAs in vitro. The polypeptide is Acyl-coenzyme A diphosphatase NUDT19 (Nudt19) (Mus musculus (Mouse)).